Consider the following 264-residue polypeptide: Putative [LysW]-aminoadipate/[LysW]-glutamate kinase (264 aa).

Substrate-binding positions include Gly-34 to Gly-35, Arg-61, and Asn-169.

It belongs to the acetylglutamate kinase family. LysZ subfamily.

It is found in the cytoplasm. It catalyses the reaction [amino-group carrier protein]-C-terminal-N-(1,4-dicarboxybutan-1-yl)-L-glutamine + ATP = [amino-group carrier protein]-C-terminal-N-(1-carboxy-5-phosphooxy-5-oxopentan-1-yl)-L-glutamine + ADP. The catalysed reaction is [amino-group carrier protein]-C-terminal-gamma-(L-glutamyl)-L-glutamate + ATP = [amino-group carrier protein]-C-terminal-gamma-(5-phospho-L-glutamyl)-L-glutamate + ADP. The protein operates within amino-acid biosynthesis; L-lysine biosynthesis via AAA pathway; L-lysine from L-alpha-aminoadipate (Thermus route): step 2/5. Its pathway is amino-acid biosynthesis; L-arginine biosynthesis. Involved in both the arginine and lysine biosynthetic pathways. Phosphorylates the LysW-bound precursors glutamate (for arginine biosynthesis), respectively alpha-aminoadipate (for lysine biosynthesis). The polypeptide is Putative [LysW]-aminoadipate/[LysW]-glutamate kinase (Ignicoccus hospitalis (strain KIN4/I / DSM 18386 / JCM 14125)).